We begin with the raw amino-acid sequence, 260 residues long: Ribosome maturation factor RimP (260 aa).

Composition is skewed to basic and acidic residues over residues 189–199 (RRGRDAEREQL) and 215–227 (AREM…PRKE). A disordered region spans residues 189-260 (RRGRDAEREQ…QTTSDPHQGE (72 aa)). Basic residues predominate over residues 228–242 (KTAKKPLPKNTKAHR).

This sequence belongs to the RimP family.

Its subcellular location is the cytoplasm. Its function is as follows. Required for maturation of 30S ribosomal subunits. This chain is Ribosome maturation factor RimP, found in Afipia carboxidovorans (strain ATCC 49405 / DSM 1227 / KCTC 32145 / OM5) (Oligotropha carboxidovorans).